The chain runs to 289 residues: Phycobilisome 39 kDa linker polypeptide, phycocyanin-associated, rod (289 aa).

The 179-residue stretch at 2-180 folds into the PBS-linker domain; the sequence is PITSAASRLG…LYRGYANSDR (179 aa). The tract at residues 213–233 is disordered; sequence SYLPSKQGTAPSRTFGRSSQG. The segment covering 216 to 233 has biased composition (polar residues); the sequence is PSKQGTAPSRTFGRSSQG. Positions 236-288 constitute a CpcD-like domain; that stretch reads PRLYRIEVTGISLPRYPKVRRSNKEFIVPYEQLSSTLQQINKLGGKVASITFA.

Belongs to the phycobilisome linker protein family.

It localises to the cellular thylakoid membrane. Functionally, rod linker protein, associated with phycocyanin. Linker polypeptides determine the state of aggregation and the location of the disk-shaped phycobiliprotein units within the phycobilisome and modulate their spectroscopic properties in order to mediate a directed and optimal energy transfer. This chain is Phycobilisome 39 kDa linker polypeptide, phycocyanin-associated, rod (cpcI2), found in Microchaete diplosiphon (Fremyella diplosiphon).